Consider the following 427-residue polypeptide: Phosphatase PSR1 (427 aa).

Residues Cys9 and Cys10 are each lipidated (S-palmitoyl cysteine). The span at 14 to 34 shows a compositional bias: polar residues; it reads TTQSNSNSAYRQQQSSSLNKN. The tract at residues 14–223 is disordered; the sequence is TTQSNSNSAY…SNDADDEDDE (210 aa). Residues 35–48 show a composition bias toward basic residues; sequence RSVKHSNTKSRTRG. Over residues 49-80 the composition is skewed to polar residues; the sequence is VHQTNSPPSKTNSAATFSSTERSTGKSGISTN. The span at 104 to 118 shows a compositional bias: basic and acidic residues; that stretch reads KVEKRISKDDLYEEK. Position 110 is a phosphoserine (Ser110). Positions 119–130 are enriched in acidic residues; it reads YEVDEDEEIDDE. Positions 131-151 are enriched in basic and acidic residues; the sequence is DNRRSRGIVQEKGDAVKDTSR. Lys154 participates in a covalent cross-link: Glycyl lysine isopeptide (Lys-Gly) (interchain with G-Cter in ubiquitin). A compositionally biased stretch (low complexity) spans 155–183; the sequence is QQQQQQQQSQPQPQPQSQSQSQSQSQSQQ. Over residues 184-214 the composition is skewed to polar residues; that stretch reads RGPTVQVSSDHLIQDMNLSRVSSSSQASETS. The region spanning 253–411 is the FCP1 homology domain; it reads STKGKKCLIL…LDIIPLLEDL (159 aa).

As to quaternary structure, interacts with WHI2.

Its subcellular location is the cell membrane. In terms of biological role, has phosphatase activity in vitro. Involved in the response to sodium and lithium ion stress (but not to potassium or sorbitol stress) by inducing transcription of the sodium pump ENA1/PMR2. Acts through a calcineurin-independent pathway and is functionally redundant with PSR2. Also involved in the general stress response; acts together with WHI2 to activate stress response element (STRE)-mediated gene expression, possibly through dephosphorylation of MSN2. The sequence is that of Phosphatase PSR1 (PSR1) from Saccharomyces cerevisiae (strain ATCC 204508 / S288c) (Baker's yeast).